A 400-amino-acid polypeptide reads, in one-letter code: LIM homeobox transcription factor 1-beta.1 (400 aa).

LIM zinc-binding domains are found at residues 54–113 (AVCE…LFAA) and 114–175 (KCSG…EKDL). A disordered region spans residues 175-228 (LLSSGSPDDSDSVKSDDEEGDVKPGKGRVNQGKGSDDGKDPRRPKRPRTILTTQ). The segment at residues 218-277 (PKRPRTILTTQQRRAFKASFEVSSKPCRKVRETLAAETGLSVRVVQVWFQNQRAKIKKLA) is a DNA-binding region (homeobox).

Shows a temporal expression pattern in three main areas: neural, kidney and limbs. From stage 13 onwards, expressed in regions of the nervous system including the placodes and otic vesicles, eye, specific sets of neurons, and in discreet regions of the neural tube. From stage 13, also expressed in the presumptive pronephros, and from stage 27 expression is predominant in the capsule of the pronephric glomus. Also expressed in the developing forelimbs and hindlimbs. In metamorphosing tadpoles, expressed in the eye, brain, muscle and mesonephric kidney.

The protein localises to the nucleus. In terms of biological role, required for early specification of the kidney glomus, lying upstream of wt1 in the pathway controlling glomus differentiation. The balance in levels and expression patterns of binding partners such as lhx1/lim-1 influences differentiation into glomus or tubule derivatives. Involved in specification of serotonergic neurons. The polypeptide is LIM homeobox transcription factor 1-beta.1 (Xenopus laevis (African clawed frog)).